Consider the following 355-residue polypeptide: Phenylalanine--tRNA ligase alpha subunit (355 aa).

Residue Glu273 participates in Mg(2+) binding.

The protein belongs to the class-II aminoacyl-tRNA synthetase family. Phe-tRNA synthetase alpha subunit type 1 subfamily. In terms of assembly, tetramer of two alpha and two beta subunits. It depends on Mg(2+) as a cofactor.

The protein localises to the cytoplasm. The enzyme catalyses tRNA(Phe) + L-phenylalanine + ATP = L-phenylalanyl-tRNA(Phe) + AMP + diphosphate + H(+). The polypeptide is Phenylalanine--tRNA ligase alpha subunit (Bifidobacterium longum subsp. infantis (strain ATCC 15697 / DSM 20088 / JCM 1222 / NCTC 11817 / S12)).